The sequence spans 102 residues: Alpha-ketoglutarate dehydrogenase component 4 (102 aa).

Residue Gly2 is modified to N-acetylglycine. Position 4 is an N6-succinyllysine (Lys4). The tract at residues 23–70 (KFPNRRDKPKLSASEALGSAALPSHSSAISQHSKGSTSPDLLMHQGPP) is disordered. Low complexity predominate over residues 33-46 (LSASEALGSAALPS). Positions 47-61 (HSSAISQHSKGSTSP) are enriched in polar residues. Residues Ser48, Ser60, and Ser89 each carry the phosphoserine modification.

Belongs to the alpha-ketoglutarate dehydrogenase component 4 family. In terms of assembly, component of the 2-oxoglutarate dehydrogenase complex (OGDHC), composed of OGDH (2-oxoglutarate dehydrogenase; also called E1 subunit), DLST (dihydrolipoamide succinyltransferase; also called E2 subunit) and DLD (dihydrolipoamide dehydrogenase; also called E3 subunit), and the assembly factor KGD4. Within OGDHC complex, interacts (via N-terminus) with E3 subunit and (via C-terminus) with E2 subunit.

The protein localises to the mitochondrion. Functionally, molecular adapter that is necessary to form a stable 2-oxoglutarate dehydrogenase enzyme complex (OGDHC). Enables the specific recruitment of E3 subunit to E2 subunit in the 2-oxoglutarate dehydrogenase complex (OGDHC). The protein is Alpha-ketoglutarate dehydrogenase component 4 of Mus musculus (Mouse).